The chain runs to 108 residues: Ig kappa chain V region GOM (108 aa).

Residues 1–23 (DIVMTQTPLSLSVSPGEPASISC) form a framework-1 region. Cys-23 and Cys-88 are joined by a disulfide. The interval 24 to 34 (RSSQSNLDYLN) is complementarity-determining-1. Positions 35-49 (WYLQKAGQSPRLLPE) are framework-2. Positions 44–66 (PRLLPEQDSQRASGVPDRFSGSG) are disordered. Positions 50-56 (QDSQRAS) are complementarity-determining-2. The framework-3 stretch occupies residues 57-88 (GVPDRFSGSGSGTDFTLRIGRVEAEDAGIYYC). Residues 89-97 (MQRSFYPYT) are complementarity-determining-3. Positions 98–107 (FGQGTRLEVR) are framework-4.

The chain is Ig kappa chain V region GOM from Canis lupus familiaris (Dog).